The primary structure comprises 117 residues: Large ribosomal subunit protein bL20c (117 aa).

It belongs to the bacterial ribosomal protein bL20 family.

The protein localises to the plastid. It localises to the chloroplast. Functionally, binds directly to 23S ribosomal RNA and is necessary for the in vitro assembly process of the 50S ribosomal subunit. It is not involved in the protein synthesizing functions of that subunit. The protein is Large ribosomal subunit protein bL20c of Eucalyptus globulus subsp. globulus (Tasmanian blue gum).